A 348-amino-acid polypeptide reads, in one-letter code: UDP-3-O-acylglucosamine N-acyltransferase (348 aa).

His237 (proton acceptor) is an active-site residue.

This sequence belongs to the transferase hexapeptide repeat family. LpxD subfamily. As to quaternary structure, homotrimer.

It carries out the reaction a UDP-3-O-[(3R)-3-hydroxyacyl]-alpha-D-glucosamine + a (3R)-hydroxyacyl-[ACP] = a UDP-2-N,3-O-bis[(3R)-3-hydroxyacyl]-alpha-D-glucosamine + holo-[ACP] + H(+). Its pathway is bacterial outer membrane biogenesis; LPS lipid A biosynthesis. Its function is as follows. Catalyzes the N-acylation of UDP-3-O-acylglucosamine using 3-hydroxyacyl-ACP as the acyl donor. Is involved in the biosynthesis of lipid A, a phosphorylated glycolipid that anchors the lipopolysaccharide to the outer membrane of the cell. This is UDP-3-O-acylglucosamine N-acyltransferase from Geotalea daltonii (strain DSM 22248 / JCM 15807 / FRC-32) (Geobacter daltonii).